Consider the following 342-residue polypeptide: Galactose mutarotase (342 aa).

Beta-D-galactose-binding positions include 81–82 (NR) and H107. Phosphoserine is present on S124. H176 serves as the catalytic Proton donor. Residues 176–178 (HSY), D243, Q279, and E307 contribute to the beta-D-galactose site. The active-site Proton acceptor is E307.

It belongs to the aldose epimerase family. Monomer.

Its subcellular location is the cytoplasm. The enzyme catalyses alpha-D-galactose = beta-D-galactose. It carries out the reaction alpha-D-glucose = beta-D-glucose. The protein operates within carbohydrate metabolism; hexose metabolism. Its pathway is carbohydrate metabolism; galactose metabolism. Its function is as follows. Mutarotase that catalyzes the interconversion of beta-D-galactose and alpha-D-galactose during galactose metabolism. Beta-D-galactose is metabolized in the liver into glucose 1-phosphate, the primary metabolic fuel, by the action of four enzymes that constitute the Leloir pathway: GALM, GALK1 (galactokinase), GALT (galactose-1-phosphate uridylyltransferase) and GALE (UDP-galactose-4'-epimerase). Involved in the maintenance of the equilibrium between the beta- and alpha-anomers of galactose, therefore ensuring a sufficient supply of the alpha-anomer for GALK1. Also active on D-glucose although shows a preference for galactose over glucose. The protein is Galactose mutarotase (GALM) of Bos taurus (Bovine).